A 469-amino-acid chain; its full sequence is 3-isopropylmalate dehydratase large subunit (469 aa).

Residues Cys347, Cys410, and Cys413 each coordinate [4Fe-4S] cluster.

It belongs to the aconitase/IPM isomerase family. LeuC type 1 subfamily. Heterodimer of LeuC and LeuD. [4Fe-4S] cluster serves as cofactor.

It carries out the reaction (2R,3S)-3-isopropylmalate = (2S)-2-isopropylmalate. It functions in the pathway amino-acid biosynthesis; L-leucine biosynthesis; L-leucine from 3-methyl-2-oxobutanoate: step 2/4. In terms of biological role, catalyzes the isomerization between 2-isopropylmalate and 3-isopropylmalate, via the formation of 2-isopropylmaleate. In Burkholderia vietnamiensis (strain G4 / LMG 22486) (Burkholderia cepacia (strain R1808)), this protein is 3-isopropylmalate dehydratase large subunit.